Here is a 505-residue protein sequence, read N- to C-terminus: Aminoaldehyde dehydrogenase 1a (505 aa).

Position 101 (Asp-101) interacts with Na(+). NAD(+) contacts are provided by residues 161–163 and 187–190; these read TPW and KPSE. Na(+) is bound at residue Leu-191. Residues 241 to 244 and Glu-262 each bind NAD(+); that span reads SFET. Glu-262 serves as the catalytic Proton acceptor. Catalysis depends on Cys-296, which acts as the Nucleophile. NAD(+) contacts are provided by Glu-395 and Trp-461.

This sequence belongs to the aldehyde dehydrogenase family. In terms of assembly, forms homodimers.

It catalyses the reaction 4-aminobutanal + NAD(+) + H2O = 4-aminobutanoate + NADH + 2 H(+). The catalysed reaction is 3-aminopropanal + NAD(+) + H2O = beta-alanine + NADH + 2 H(+). It carries out the reaction 4-(trimethylamino)butanal + NAD(+) + H2O = 4-(trimethylamino)butanoate + NADH + 2 H(+). The enzyme catalyses 4-guanidinobutanal + NAD(+) + H2O = 4-guanidinobutanoate + NADH + 2 H(+). It catalyses the reaction betaine aldehyde + NAD(+) + H2O = glycine betaine + NADH + 2 H(+). It participates in amine and polyamine biosynthesis; betaine biosynthesis via choline pathway; betaine from betaine aldehyde: step 1/1. Functionally, dehydrogenase that catalyzes the oxidation of several aminoaldehydes. Metabolizes and detoxifies aldehyde products of polyamine degradation to non-toxic amino acids. Catalyzes the oxidation of 4-aminobutanal and 3-aminopropanal to 4-aminobutanoate and beta-alanine, respectively. Catalyzes the oxidation of 4-(trimethylamino)butanal and 4-guanidinobutanal to 4-trimethylammoniobutanoate and 4-guanidinobutanoate, respectively. Catalyzes the oxidation of betaine aldehyde to glycine betaine. In terms of biological role, dehydrogenase that catalyzes the oxidation of several aminoaldehydes. Catalyzes the oxidation of betaine aldehyde to glycine betaine. Catalyzes the oxidation of 4-(trimethylamino)butanal to 4-trimethylammoniobutanoate. This Zea mays (Maize) protein is Aminoaldehyde dehydrogenase 1a.